The primary structure comprises 255 residues: tRNA pseudouridine synthase B (255 aa).

The Nucleophile role is filled by Asp58.

The protein belongs to the pseudouridine synthase TruB family. Type 1 subfamily.

It carries out the reaction uridine(55) in tRNA = pseudouridine(55) in tRNA. In terms of biological role, responsible for synthesis of pseudouridine from uracil-55 in the psi GC loop of transfer RNAs. The sequence is that of tRNA pseudouridine synthase B from Chlorobium chlorochromatii (strain CaD3).